The sequence spans 656 residues: UvrABC system protein B (656 aa).

Positions 24–409 constitute a Helicase ATP-binding domain; sequence QGVRNRTPSQ…QGHIVEQILR (386 aa). 37-44 lines the ATP pocket; the sequence is GTTGSGKT. Positions 90-113 match the Beta-hairpin motif; sequence YYDYYQPEAYIARNDTYIEKSLLI. Positions 426-589 constitute a Helicase C-terminal domain; the sequence is QVDDLLEEIR…ITPKPIIKAI (164 aa). Residues 616–651 enclose the UVR domain; sequence EKLIKKYENLMLQAANAFRFDEAAQYRDKMKAAKEQ.

This sequence belongs to the UvrB family. As to quaternary structure, forms a heterotetramer with UvrA during the search for lesions. Interacts with UvrC in an incision complex.

Its subcellular location is the cytoplasm. Functionally, the UvrABC repair system catalyzes the recognition and processing of DNA lesions. A damage recognition complex composed of 2 UvrA and 2 UvrB subunits scans DNA for abnormalities. Upon binding of the UvrA(2)B(2) complex to a putative damaged site, the DNA wraps around one UvrB monomer. DNA wrap is dependent on ATP binding by UvrB and probably causes local melting of the DNA helix, facilitating insertion of UvrB beta-hairpin between the DNA strands. Then UvrB probes one DNA strand for the presence of a lesion. If a lesion is found the UvrA subunits dissociate and the UvrB-DNA preincision complex is formed. This complex is subsequently bound by UvrC and the second UvrB is released. If no lesion is found, the DNA wraps around the other UvrB subunit that will check the other stand for damage. The protein is UvrABC system protein B of Chlamydia abortus (strain DSM 27085 / S26/3) (Chlamydophila abortus).